Consider the following 126-residue polypeptide: UPF0235 protein C15orf40 homolog (126 aa).

The interval 1–32 (MPKKAGATSKGKNQTKEPETAPPAAGPVATDP) is disordered. At Ser89 the chain carries Phosphoserine.

The protein belongs to the UPF0235 family.

The protein is UPF0235 protein C15orf40 homolog of Mus musculus (Mouse).